The chain runs to 188 residues: Segregation and condensation protein B (188 aa).

It belongs to the ScpB family. Homodimer. Homodimerization may be required to stabilize the binding of ScpA to the Smc head domains. Component of a cohesin-like complex composed of ScpA, ScpB and the Smc homodimer, in which ScpA and ScpB bind to the head domain of Smc. The presence of the three proteins is required for the association of the complex with DNA.

It is found in the cytoplasm. In terms of biological role, participates in chromosomal partition during cell division. May act via the formation of a condensin-like complex containing Smc and ScpA that pull DNA away from mid-cell into both cell halves. The protein is Segregation and condensation protein B of Streptococcus gordonii (strain Challis / ATCC 35105 / BCRC 15272 / CH1 / DL1 / V288).